A 596-amino-acid polypeptide reads, in one-letter code: CRISPR-associated DNA-binding protein Cas12m (596 aa).

The tract at residues 19 to 53 (EVLRQQLWLAHNLREDLVSLQLAYDDDLKAIWSSY) is recognition domain (REC1-N). Positions 54–121 (PDVAQAEDTM…RDAIAVVKDD (68 aa)) are recognition domain (REC2). 2 coiled-coil regions span residues 55 to 83 (DVAQAEDTMAAAEADAVALSERVKQARIE) and 91 to 117 (TELTQQLRDAKKRLKDARQARRDAIAV). Residues 122-190 (AAERRKARSD…LRHHRFDGSG (69 aa)) are recognition domain (REC1-C). The wedge domain (WED) stretch occupies residues 191-302 (TIAVQLQRQA…RAKLCVTARI (112 aa)). Residues 303–313 (GDTEPVTSGPT) are linker. The interval 314–541 (VALHLGWRST…RDGVPVTIVA (228 aa)) is ruvC-I. His317 serves as a coordination point for Mg(2+). The segment at 541–577 (AAADFTRTHSRCGHVNPADDRYLSNPVRCDGCGAMYD) is target nucleic-acid binding (TNB). The Zn(2+) site is built by His549, Cys552, Cys569, and Cys572. The ruvC-II stretch occupies residues 578 to 596 (QDRSFVTLMLRAATAPSNP). Asp579 serves as a coordination point for Mg(2+).

Belongs to the CRISPR-associated DNA-binding protein Cas12m family. In terms of assembly, binds crRNA and target dsDNA as a monomer. It depends on Mg(2+) as a cofactor. Zn(2+) serves as cofactor.

Its function is as follows. CRISPR (clustered regularly interspaced short palindromic repeat), is an adaptive immune system that provides protection against mobile genetic elements (viruses, transposable elements and conjugative plasmids). CRISPR clusters contain sequences complementary to antecedent mobile elements and target invading nucleic acids. CRISPR clusters are transcribed and processed into CRISPR RNA (crRNA). Recognizes a short motif in the CRISPR repeat sequences (the 5' PAM or protospacer adjacent motif, 5'-TTN-3' in this organism) to help distinguish self versus nonself, as targets within the bacterial CRISPR locus do not have PAMs. Upon expression in E.coli as a CRISPR locus inhibits plasmid propagation when targeted to regions essential for plasmid propagation (replication origin and dnaA). The crRNA-Cas12m complex inhibits transcription from target DNA leading to gene silencing. Cas12m-crRNA binds DNA in a PAM-dependent, crRNA-guided fashion. Binds a 17-bp crRNA-ss-target DNA heteroduplex, in a 56 nucleotide crRNA. No dsDNA, ssDNA or RNA nuclease activity is seen for the crRNA-Cas12m complex. Is required to process pre-crRNA to mature crRNA without a tracrRNA. Upon expression in E.coli as a CRISPR region preferentially binds to its associated crRNA. In Mycolicibacterium mucogenicum (Mycobacterium mucogenicum), this protein is CRISPR-associated DNA-binding protein Cas12m.